Consider the following 215-residue polypeptide: MSSENLPPDVIKRVVKELKELNSSTLEGITLLPCEEDITNIEAVVTGPAGTPYEGGYFKARLILSSDFPRSPPKANFITKIFHPNVSKKGEICVNTLKKDWTEDLGLKHILLTIKCLLIVPNAESSLNEDASRLLLENYDDYCKHAKLFTSIHASKPIIDSNNNNENSTTTPTTTTTATTPSTNTASISSPVKKKTETTNSTTTKVQPKKSLKRL.

The region spanning 9-155 (DVIKRVVKEL…AKLFTSIHAS (147 aa)) is the UBC core domain. The Glycyl thioester intermediate role is filled by C93. The interval 159–215 (IDSNNNNENSTTTPTTTTTATTPSTNTASISSPVKKKTETTNSTTTKVQPKKSLKRL) is disordered. Positions 161-190 (SNNNNENSTTTPTTTTTATTPSTNTASISS) are enriched in low complexity.

This sequence belongs to the ubiquitin-conjugating enzyme family.

It catalyses the reaction S-ubiquitinyl-[E1 ubiquitin-activating enzyme]-L-cysteine + [E2 ubiquitin-conjugating enzyme]-L-cysteine = [E1 ubiquitin-activating enzyme]-L-cysteine + S-ubiquitinyl-[E2 ubiquitin-conjugating enzyme]-L-cysteine.. Its pathway is protein modification; protein ubiquitination. Its function is as follows. Catalyzes the covalent attachment of ubiquitin to other proteins. Acts as an essential factor of the anaphase promoting complex/cyclosome (APC/C), a cell cycle-regulated ubiquitin ligase that controls progression through mitosis. Acts by specifically elongating polyubiquitin chains initiated by the E2 enzyme ubch10 on APC/C substrates, enhancing the degradation of APC/C substrates by the proteasome and promoting mitotic exit. This is Ubiquitin-conjugating enzyme E2 S (ube2s) from Dictyostelium discoideum (Social amoeba).